A 98-amino-acid chain; its full sequence is NADH-ubiquinone oxidoreductase chain 4L (98 aa).

Helical transmembrane passes span 1-21, 29-49, and 58-78; these read MPII…GMLI, SLLC…LMAL, and IVPI…LALL.

The protein belongs to the complex I subunit 4L family. Core subunit of respiratory chain NADH dehydrogenase (Complex I) which is composed of 45 different subunits.

The protein resides in the mitochondrion inner membrane. It carries out the reaction a ubiquinone + NADH + 5 H(+)(in) = a ubiquinol + NAD(+) + 4 H(+)(out). Functionally, core subunit of the mitochondrial membrane respiratory chain NADH dehydrogenase (Complex I) which catalyzes electron transfer from NADH through the respiratory chain, using ubiquinone as an electron acceptor. Part of the enzyme membrane arm which is embedded in the lipid bilayer and involved in proton translocation. The polypeptide is NADH-ubiquinone oxidoreductase chain 4L (MT-ND4L) (Colobus guereza (Mantled guereza)).